Consider the following 426-residue polypeptide: Dihydroorotase (426 aa).

Residues His-61 and His-63 each coordinate Zn(2+). Residues 63 to 65 (HCR) and Asn-95 contribute to the substrate site. Glu-146, His-180, His-229, and Asp-297 together coordinate Zn(2+). Asp-297 is a catalytic residue. His-301 provides a ligand contact to substrate.

This sequence belongs to the metallo-dependent hydrolases superfamily. DHOase family. Class I DHOase subfamily. Requires Zn(2+) as cofactor.

It carries out the reaction (S)-dihydroorotate + H2O = N-carbamoyl-L-aspartate + H(+). It functions in the pathway pyrimidine metabolism; UMP biosynthesis via de novo pathway; (S)-dihydroorotate from bicarbonate: step 3/3. Catalyzes the reversible cyclization of carbamoyl aspartate to dihydroorotate. This chain is Dihydroorotase, found in Methanopyrus kandleri (strain AV19 / DSM 6324 / JCM 9639 / NBRC 100938).